The following is a 290-amino-acid chain: Probable 2-(5''-triphosphoribosyl)-3'-dephosphocoenzyme-A synthase (290 aa).

It belongs to the CitG/MdcB family.

The catalysed reaction is 3'-dephospho-CoA + ATP = 2'-(5''-triphospho-alpha-D-ribosyl)-3'-dephospho-CoA + adenine. In terms of biological role, involved in the formation of 2-(5''-phosphoribosyl)-3'-dephosphocoenzyme-A, the prosthetic group of the acyl-carrier protein of the malonate decarboxylase. In Stutzerimonas stutzeri (strain A1501) (Pseudomonas stutzeri), this protein is Probable 2-(5''-triphosphoribosyl)-3'-dephosphocoenzyme-A synthase.